Reading from the N-terminus, the 117-residue chain is Putative pterin-4-alpha-carbinolamine dehydratase (117 aa).

This sequence belongs to the pterin-4-alpha-carbinolamine dehydratase family.

The catalysed reaction is (4aS,6R)-4a-hydroxy-L-erythro-5,6,7,8-tetrahydrobiopterin = (6R)-L-erythro-6,7-dihydrobiopterin + H2O. In Azoarcus sp. (strain BH72), this protein is Putative pterin-4-alpha-carbinolamine dehydratase.